The sequence spans 86 residues: Small ribosomal subunit protein bS20 (86 aa).

This sequence belongs to the bacterial ribosomal protein bS20 family.

Binds directly to 16S ribosomal RNA. This is Small ribosomal subunit protein bS20 from Oceanobacillus iheyensis (strain DSM 14371 / CIP 107618 / JCM 11309 / KCTC 3954 / HTE831).